Reading from the N-terminus, the 331-residue chain is Sucrose operon repressor (331 aa).

One can recognise an HTH lacI-type domain in the interval 1–56 (MASLKDVARLAGVSMMTVSRVMHNAESVRPATRDRVLQAIQTLNYVPDLSARKMRA). The H-T-H motif DNA-binding region spans 4 to 23 (LKDVARLAGVSMMTVSRVMH).

Its function is as follows. Repressor for the csc operon. Binds D-fructose as an inducer. This Escherichia coli protein is Sucrose operon repressor (cscR).